The chain runs to 1136 residues: Receptor-type guanylate cyclase gcy-4 (1136 aa).

The signal sequence occupies residues 1-21; sequence MRQLNYYIFISTILTYNLTHG. The Extracellular portion of the chain corresponds to 22 to 485; that stretch reads QGPRPVIRVG…CPLPIFEQYR (464 aa). Residues asparagine 40, asparagine 194, asparagine 252, asparagine 351, asparagine 377, asparagine 386, and asparagine 438 are each glycosylated (N-linked (GlcNAc...) asparagine). The chain crosses the membrane as a helical span at residues 486–506; that stretch reads ALVIVAIAVTILILLAIIICM. Residues 507–1136 are Cytoplasmic-facing; the sequence is SSKIRNRRVE…LRREMMRVEV (630 aa). In terms of domain architecture, Protein kinase spans 533 to 833; sequence LPMHRRASKS…EDNLMDHVFS (301 aa). Positions 536–565 are disordered; the sequence is HRRASKSSQESETESASETENFTSKSGDTM. The Guanylate cyclase domain occupies 891–1021; sequence TVFFSDLVKF…DTVNTASRME (131 aa).

The protein belongs to the adenylyl cyclase class-4/guanylyl cyclase family. In terms of tissue distribution, expression is biased toward ASE right (ASER) sensory neuron.

It localises to the cell membrane. The enzyme catalyses GTP = 3',5'-cyclic GMP + diphosphate. Functionally, guanylate cyclase involved in the production of the second messenger cGMP. Regulates chemotaxis responses toward Br(1-) and I(1-) salt ions in ASE right (ASER) sensory neuron. This chain is Receptor-type guanylate cyclase gcy-4, found in Caenorhabditis elegans.